The sequence spans 233 residues: Large ribosomal subunit protein uL1 (233 aa).

The protein belongs to the universal ribosomal protein uL1 family. As to quaternary structure, part of the 50S ribosomal subunit.

In terms of biological role, binds directly to 23S rRNA. The L1 stalk is quite mobile in the ribosome, and is involved in E site tRNA release. Protein L1 is also a translational repressor protein, it controls the translation of the L11 operon by binding to its mRNA. The sequence is that of Large ribosomal subunit protein uL1 from Proteus vulgaris.